Consider the following 306-residue polypeptide: Serrate RNA effector molecule homolog (306 aa).

Positions 1–28 are disordered; that stretch reads HKEEELLGSSGGPPPEEPPKEGNPAEIN. T101 carries the phosphothreonine modification. S109 carries the phosphoserine modification. Positions 251-284 are disordered; the sequence is GPPYPHGPYGAGRGNYDAFRGQGGYPGKPRNRMV. Omega-N-methylarginine occurs at positions 263, 270, and 280.

It belongs to the ARS2 family. As to quaternary structure, interacts with CASP8AP2, ERBB4, NCBP1/CBP80 and DROSHA. Interacts with LUZP4. Interacts with NCBP2/CBP20 and NCBP3.

It localises to the nucleus. The protein resides in the nucleoplasm. Its subcellular location is the cytoplasm. In terms of biological role, acts as a mediator between the cap-binding complex (CBC) and the primary microRNAs (miRNAs) processing machinery during cell proliferation. Contributes to the stability and delivery of capped primary miRNA transcripts to the primary miRNA processing complex containing DGCR8 and DROSHA, thereby playing a role in RNA-mediated gene silencing (RNAi) by miRNAs. Binds capped RNAs (m7GpppG-capped RNA); however interaction is probably mediated via its interaction with NCBP1/CBP80 component of the CBC complex. Involved in cell cycle progression at S phase. Does not directly confer arsenite resistance but rather modulates arsenic sensitivity. Independently of its activity on miRNAs, necessary and sufficient to promote neural stem cell self-renewal. Does so by directly binding SOX2 promoter and positively regulating its transcription. The polypeptide is Serrate RNA effector molecule homolog (SRRT) (Cricetulus griseus (Chinese hamster)).